The primary structure comprises 95 residues: uncharacterized protein (95 aa).

This is an uncharacterized protein from Saccharomyces cerevisiae (strain ATCC 204508 / S288c) (Baker's yeast).